Consider the following 647-residue polypeptide: Exoribonuclease 2 (647 aa).

An RNB domain is found at 191-517; the sequence is REDLCALPFV…VNHRLLKALI (327 aa). Residues 563 to 645 form the S1 motif domain; that stretch reads PTPFNAEIID…DTRSLIARPF (83 aa).

The protein belongs to the RNR ribonuclease family. RNase II subfamily.

The protein localises to the cytoplasm. The enzyme catalyses Exonucleolytic cleavage in the 3'- to 5'-direction to yield nucleoside 5'-phosphates.. Its function is as follows. Involved in mRNA degradation. Hydrolyzes single-stranded polyribonucleotides processively in the 3' to 5' direction. This chain is Exoribonuclease 2, found in Edwardsiella piscicida.